Here is a 503-residue protein sequence, read N- to C-terminus: 11-hydroxysugiol 20-monooxygenase (503 aa).

The helical transmembrane segment at 2–22 threads the bilayer; the sequence is QVLIVASLAFLAAWLVYSRWS. A heme-binding site is contributed by C446.

Belongs to the cytochrome P450 family. Requires heme as cofactor. As to expression, highly expressed in roots.

It localises to the membrane. It carries out the reaction 11-hydroxysugiol + reduced [NADPH--hemoprotein reductase] + O2 = 11,20-dihydroxysugiol + oxidized [NADPH--hemoprotein reductase] + H2O + H(+). It catalyses the reaction 11-hydroxyferruginol + reduced [NADPH--hemoprotein reductase] + O2 = 11,20-dihydroxyferruginol + oxidized [NADPH--hemoprotein reductase] + H2O + H(+). The protein operates within secondary metabolite biosynthesis; terpenoid biosynthesis. In terms of biological role, monooxygenase that oxidizes 11-hydroxysugiol to produce 11,20-dihydroxysugiol. Can oxidize 11-hydroxyferruginol to produce 11,20-dihydroxyferruginol. These products are intermediates in tanshinone biosynthesis. This is 11-hydroxysugiol 20-monooxygenase from Salvia miltiorrhiza (Chinese sage).